The primary structure comprises 503 residues: Hexose transporter 1 (503 aa).

Residues M1–S26 are Cytoplasmic-facing. A helical membrane pass occupies residues L27–L47. At N48–S76 the chain is on the extracellular side. C61 and C68 are disulfide-bonded. A helical transmembrane segment spans residues F77–V97. Over Q98–R102 the chain is Cytoplasmic. Residues F103–H123 traverse the membrane as a helical segment. The Extracellular segment spans residues H124–R132. A helical membrane pass occupies residues L133–M153. At T154–G163 the chain is on the cytoplasmic side. A helical transmembrane segment spans residues V164–M184. Q167 serves as a coordination point for alpha-D-glucose. Q167 provides a ligand contact to beta-D-glucose. The Extracellular portion of the chain corresponds to G185–R205. Residues L206–Y226 traverse the membrane as a helical segment. Topologically, residues K227–N291 are cytoplasmic. Residues V292–V312 traverse the membrane as a helical segment. 3 residues coordinate alpha-D-glucose: Q303, Q304, and N309. Q303 provides a ligand contact to beta-D-glucose. N309 lines the beta-D-glucose pocket. Over S313–T329 the chain is Extracellular. Residues T330–V350 form a helical membrane-spanning segment. N339 is a binding site for beta-D-glucose. Residues E351–K356 lie on the Cytoplasmic side of the membrane. The helical transmembrane segment at T357 to A377 threads the bilayer. The Extracellular segment spans residues N378–S391. A helical membrane pass occupies residues I392–I412. W411 contributes to the alpha-D-glucose binding site. Residues Y413–S428 are Cytoplasmic-facing. Residues L429–I449 traverse the membrane as a helical segment. Over K450–T454 the chain is Extracellular. The chain crosses the membrane as a helical span at residues I455–I475. Over K476–V503 the chain is Cytoplasmic.

Belongs to the major facilitator superfamily. Sugar transporter (TC 2.A.1.1) family. As to quaternary structure, homodimer.

It is found in the cell membrane. The enzyme catalyses D-glucose(out) = D-glucose(in). It carries out the reaction D-fructose(out) = D-fructose(in). The catalysed reaction is D-galactose(in) = D-galactose(out). It catalyses the reaction D-mannose(out) = D-mannose(in). The enzyme catalyses D-glucosamine(out) = D-glucosamine(in). It carries out the reaction D-xylose(out) = D-xylose(in). Inhibited by compound 3361 (3-O-((undec-10-en)-1-yl)-D-glucose). Functionally, sodium-independent facilitative hexose transporter. Can transport D-glucose and D-fructose. Can transport D-mannose, D-galactose, D-xylose and D-glucosamine. The sequence is that of Hexose transporter 1 from Plasmodium vivax.